The chain runs to 116 residues: Cyclin-dependent protein kinase inhibitor SMR9 (116 aa).

Positions 1-22 are enriched in basic residues; the sequence is MASKGKKPLRRTTTRRRKRSHF. The segment at 1–62 is disordered; the sequence is MASKGKKPLR…PVSAESGCCT (62 aa). Over residues 35 to 56 the composition is skewed to low complexity; it reads VTSTSSTSTSPTSTATPSPVSA.

Probable cyclin-dependent protein kinase (CDK) inhibitor that functions as a repressor of mitosis in the endoreduplication cell cycle. In Arabidopsis thaliana (Mouse-ear cress), this protein is Cyclin-dependent protein kinase inhibitor SMR9.